The sequence spans 274 residues: Leucine-rich repeat-containing protein 10 (274 aa).

LRR repeat units lie at residues 30 to 51 (LDRMVDLSGSQLRRFPLHVCSF), 52 to 74 (TELVKLYLSDNHLHSLPPDLAQL), 76 to 97 (NLQILALDFNNFKALPRVVCTL), 98 to 120 (KQLCILYLGNNKLCDLPDELSLL), 121 to 143 (QNLRTLWLESNCLTRLPDVVCEL), 145 to 166 (LLKTLHAGSNALRLLPGQLRRL), 167 to 189 (RELRTIWLSGNQLADFPSVLLRM), and 191 to 213 (FLEVIDVDRNSIRYFPSLAHLTN). Positions 236–274 (RVGRWAEETPEPDPRKARRYALAKEENQEPPPPLLPSSS) are disordered. Over residues 239–250 (RWAEETPEPDPR) the composition is skewed to basic and acidic residues. Positions 264 to 274 (EPPPPLLPSSS) are enriched in pro residues.

In terms of tissue distribution, detected specifically in the heart.

It localises to the nucleus. Its function is as follows. May play important roles in cardiac development and/or cardiac function. The sequence is that of Leucine-rich repeat-containing protein 10 (Lrrc10) from Mus musculus (Mouse).